The chain runs to 566 residues: Serine/threonine-protein kinase PknE (566 aa).

At 1-337 (MDGTAESREG…PLPRSARQPW (337 aa)) the chain is on the cytoplasmic side. The residue at position 7 (Ser-7) is a Phosphoserine; by autocatalysis. A Phosphothreonine; by autocatalysis modification is found at Thr-11. The Protein kinase domain maps to 16–275 (YRLRRLVGRG…DLSAAAHAAL (260 aa)). Residues 22-30 (VGRGGMGDV) and Lys-45 each bind ATP. Phosphothreonine; by autocatalysis occurs at positions 50 and 59. Asp-139 acts as the Proton acceptor in catalysis. A phosphothreonine; by autocatalysis mark is found at Thr-170, Thr-175, and Thr-178. The tract at residues 296–330 (PVPSTHPVSPGTRWPQPTPWAGGAPPWGPPSSPLP) is disordered. The chain crosses the membrane as a helical span at residues 338-358 (LWVGVAVAVVVALAGGLGIAL). At 359 to 566 (AHPWRSSGPR…DPSWLARLIG (208 aa)) the chain is on the extracellular side.

It belongs to the protein kinase superfamily. Ser/Thr protein kinase family. Autophosphorylated on serine and threonine residues. Dephosphorylated by PstP.

The protein localises to the cell membrane. It catalyses the reaction L-seryl-[protein] + ATP = O-phospho-L-seryl-[protein] + ADP + H(+). It carries out the reaction L-threonyl-[protein] + ATP = O-phospho-L-threonyl-[protein] + ADP + H(+). The sequence is that of Serine/threonine-protein kinase PknE (pknE) from Mycobacterium bovis (strain ATCC BAA-935 / AF2122/97).